The chain runs to 597 residues: Glutamine--fructose-6-phosphate aminotransferase [isomerizing] (597 aa).

Residue Cys-2 is the Nucleophile; for GATase activity of the active site. In terms of domain architecture, Glutamine amidotransferase type-2 spans 2 to 218 (CGIVGYIGDS…ENSVGQISLE (217 aa)). 2 SIS domains span residues 276 to 416 (IDPE…QLGT) and 449 to 587 (LSKR…VDHP). Catalysis depends on Lys-592, which acts as the For Fru-6P isomerization activity.

In terms of assembly, homodimer.

The protein localises to the cytoplasm. It catalyses the reaction D-fructose 6-phosphate + L-glutamine = D-glucosamine 6-phosphate + L-glutamate. Catalyzes the first step in hexosamine metabolism, converting fructose-6P into glucosamine-6P using glutamine as a nitrogen source. This is Glutamine--fructose-6-phosphate aminotransferase [isomerizing] from Helicobacter pylori (strain J99 / ATCC 700824) (Campylobacter pylori J99).